The sequence spans 573 residues: 60 kDa heat shock protein, mitochondrial (573 aa).

The transit peptide at 1–26 (MLRLPTVFRQMRPVSRVLAPHLTRAY) directs the protein to the mitochondrion. Lysine 31 is subject to N6-succinyllysine. Phosphoserine occurs at positions 67 and 70. ATP is bound at residue lysine 75. Lysine 75 bears the N6-acetyllysine mark. The residue at position 82 (lysine 82) is an N6-acetyllysine; alternate. At lysine 82 the chain carries N6-succinyllysine; alternate. Lysine 87 carries the N6-acetyllysine modification. Phosphotyrosine is present on tyrosine 90. N6-acetyllysine is present on lysine 91. Residue 111 to 115 (DGTTT) coordinates ATP. N6-acetyllysine; alternate is present on lysine 125. The residue at position 125 (lysine 125) is an N6-succinyllysine; alternate. Lysine 130 is subject to N6-acetyllysine. Lysine 133 is subject to N6-acetyllysine; alternate. Position 133 is an N6-succinyllysine; alternate (lysine 133). Lysine 133 is subject to N6-malonyllysine; alternate. At lysine 156 the chain carries N6-acetyllysine. N6-acetyllysine; alternate occurs at positions 191, 202, 205, 218, and 236. N6-succinyllysine; alternate occurs at positions 191, 202, 205, 218, and 236. Lysine 249 carries the N6-acetyllysine modification. Lysine 250 bears the N6-acetyllysine; alternate mark. An N6-succinyllysine; alternate modification is found at lysine 250. N6-acetyllysine occurs at positions 269 and 292. Lysine 301 bears the N6-succinyllysine mark. Lysine 314 is modified (N6-acetyllysine). Lysine 352 bears the N6-acetyllysine; alternate mark. The residue at position 352 (lysine 352) is an N6-succinyllysine; alternate. Lysine 389 is modified (N6-acetyllysine). At lysine 396 the chain carries N6-acetyllysine; alternate. An N6-succinyllysine; alternate modification is found at lysine 396. Serine 410 is subject to Phosphoserine. Glycine 440 lines the ATP pocket. Lysine 469 is subject to N6-acetyllysine. Residue lysine 481 is modified to N6-acetyllysine; alternate. The residue at position 481 (lysine 481) is an N6-succinyllysine; alternate. Position 488 is a phosphoserine (serine 488). An ATP-binding site is contributed by aspartate 520. Lysine 551 is covalently cross-linked (Glycyl lysine isopeptide (Lys-Gly) (interchain with G-Cter in SUMO2)).

Belongs to the chaperonin (HSP60) family. In terms of assembly, homoheptamer arranged in a ring structure. The functional units of these chaperonins consist of heptameric rings of the large subunit Hsp60, which function as a back-to-back double ring. Interacts with 2 heptameric Hsp10 rings to form the symmetrical football complex. Interacts with HRAS. Interacts with ATAD3A. Interacts with ETFBKMT and EEF1AKMT3. Interacts with MFHAS1.

It localises to the mitochondrion matrix. The catalysed reaction is ATP + H2O + a folded polypeptide = ADP + phosphate + an unfolded polypeptide.. In terms of biological role, chaperonin implicated in mitochondrial protein import and macromolecular assembly. Together with Hsp10, facilitates the correct folding of imported proteins. May also prevent misfolding and promote the refolding and proper assembly of unfolded polypeptides generated under stress conditions in the mitochondrial matrix. The functional units of these chaperonins consist of heptameric rings of the large subunit Hsp60, which function as a back-to-back double ring. In a cyclic reaction, Hsp60 ring complexes bind one unfolded substrate protein per ring, followed by the binding of ATP and association with 2 heptameric rings of the co-chaperonin Hsp10. This leads to sequestration of the substrate protein in the inner cavity of Hsp60 where, for a certain period of time, it can fold undisturbed by other cell components. Synchronous hydrolysis of ATP in all Hsp60 subunits results in the dissociation of the chaperonin rings and the release of ADP and the folded substrate protein. The protein is 60 kDa heat shock protein, mitochondrial (HSPD1) of Pongo abelii (Sumatran orangutan).